The sequence spans 525 residues: Protein ea59 (525 aa).

In Escherichia coli (Bacteriophage lambda), this protein is Protein ea59 (ea59).